The primary structure comprises 389 residues: Large ribosomal subunit protein uL3 (389 aa).

The disordered stretch occupies residues 1–36; that stretch reads MSHRKFEHPRHGSLGFLPRKRSSRHRGKVKSFPKDD. Over residues 18 to 31 the composition is skewed to basic residues; that stretch reads PRKRSSRHRGKVKS.

The protein belongs to the universal ribosomal protein uL3 family.

The protein localises to the cytoplasm. In terms of biological role, the L3 protein is a component of the large subunit of cytoplasmic ribosomes. This chain is Large ribosomal subunit protein uL3 (RPL3), found in Oryza sativa subsp. japonica (Rice).